Consider the following 367-residue polypeptide: Inner membrane amino-acid ABC transporter permease protein YhdY (367 aa).

At 1 to 36 (MTKVLLSHPPRPASHNSSRAMVWVRKNLFSSWSNSL) the chain is on the cytoplasmic side. The chain crosses the membrane as a helical span at residues 37-57 (LTIGCIWLMWELIPPLLNWAF). Over 58-99 (LQANWVGSTRADCTKAGACWVFIHERFGQFMYGLYPHDQRWR) the chain is Periplasmic. The chain crosses the membrane as a helical span at residues 100–120 (INLALLIGLVSIAPMFWKILP). Topologically, residues 121–125 (HRGRY) are cytoplasmic. The helical transmembrane segment at 126–146 (IAAWAVIYPLIVWWLMYGGFF) threads the bilayer. The Periplasmic portion of the chain corresponds to 147 to 162 (ALERVETRQWGGLTLT). Positions 159-353 (LTLTLIIASV…IFCFSMSRYS (195 aa)) constitute an ABC transmembrane type-1 domain. Residues 163-183 (LIIASVGIAGALPWGILLALG) traverse the membrane as a helical segment. Topologically, residues 184 to 192 (RRSHMPIVR) are cytoplasmic. The helical transmembrane segment at 193–213 (ILSVIFIEFWRGVPLITVLFM) threads the bilayer. Residues 214–233 (SSVMLPLFMAEGTSIDKLIR) lie on the Periplasmic side of the membrane. The helical transmembrane segment at 234–254 (ALVGVILFQSAYVAEVVRGGL) threads the bilayer. Residues 255-291 (QALPKGQYEAAESLALGYWKTQGLVILPQALKLVIPG) are Cytoplasmic-facing. The chain crosses the membrane as a helical span at residues 292-312 (LVNTIIALFKDTSLVIIIGLF). The Periplasmic portion of the chain corresponds to 313 to 326 (DLFSSVQQATVDPA). The chain crosses the membrane as a helical span at residues 327-347 (WLGMSTEGYVFAALIYWIFCF). Over 348-367 (SMSRYSQYLEKRFNTGRTPH) the chain is Cytoplasmic.

Belongs to the binding-protein-dependent transport system permease family. HisMQ subfamily.

The protein resides in the cell inner membrane. Its function is as follows. Probably part of the binding-protein-dependent transport system YdhWXYZ for an amino acid; probably responsible for the translocation of the substrate across the membrane. The protein is Inner membrane amino-acid ABC transporter permease protein YhdY (yhdY) of Escherichia coli (strain K12).